The following is a 302-amino-acid chain: Dihydroorotate dehydrogenase B (NAD(+)), catalytic subunit (302 aa).

Residues Ser-20 and 44-45 (KG) contribute to the FMN site. Substrate-binding positions include Lys-44 and 68-72 (NSVGL). FMN-binding residues include Asn-98 and Asn-125. Asn-125 is a binding site for substrate. Cys-128 acts as the Nucleophile in catalysis. FMN contacts are provided by Lys-163 and Ile-189. Residue 190–191 (NT) coordinates substrate. Residues Gly-215, 241 to 242 (GG), and 263 to 264 (GT) each bind FMN.

The protein belongs to the dihydroorotate dehydrogenase family. Type 1 subfamily. Heterotetramer of 2 PyrK and 2 PyrD type B subunits. It depends on FMN as a cofactor.

It is found in the cytoplasm. The enzyme catalyses (S)-dihydroorotate + NAD(+) = orotate + NADH + H(+). Its pathway is pyrimidine metabolism; UMP biosynthesis via de novo pathway; orotate from (S)-dihydroorotate (NAD(+) route): step 1/1. Catalyzes the conversion of dihydroorotate to orotate with NAD(+) as electron acceptor. This Thermoanaerobacter sp. (strain X514) protein is Dihydroorotate dehydrogenase B (NAD(+)), catalytic subunit (pyrD).